The primary structure comprises 196 residues: Pyridoxal 5'-phosphate synthase subunit PdxT (196 aa).

47-49 (GES) lines the L-glutamine pocket. Catalysis depends on Cys-79, which acts as the Nucleophile. Residues Arg-106 and 134–135 (IR) each bind L-glutamine. Residues His-170 and Glu-172 each act as charge relay system in the active site.

This sequence belongs to the glutaminase PdxT/SNO family. In the presence of PdxS, forms a dodecamer of heterodimers. Only shows activity in the heterodimer.

It carries out the reaction aldehydo-D-ribose 5-phosphate + D-glyceraldehyde 3-phosphate + L-glutamine = pyridoxal 5'-phosphate + L-glutamate + phosphate + 3 H2O + H(+). The enzyme catalyses L-glutamine + H2O = L-glutamate + NH4(+). The protein operates within cofactor biosynthesis; pyridoxal 5'-phosphate biosynthesis. Functionally, catalyzes the hydrolysis of glutamine to glutamate and ammonia as part of the biosynthesis of pyridoxal 5'-phosphate. The resulting ammonia molecule is channeled to the active site of PdxS. This chain is Pyridoxal 5'-phosphate synthase subunit PdxT, found in Bacillus velezensis (strain DSM 23117 / BGSC 10A6 / LMG 26770 / FZB42) (Bacillus amyloliquefaciens subsp. plantarum).